The following is a 457-amino-acid chain: Nuclear distribution protein PAC1 (457 aa).

Residues 73 to 106 adopt a coiled-coil conformation; sequence SSIVRLQRRIIELEKEIQELTDENENLRENGPSS. WD repeat units lie at residues 126-165, 169-211, 216-257, 260-299, 322-362, 382-419, and 423-457; these read SAGA…MPVA, AHMR…LQLI, GHEH…CLKS, PHTE…SFGT, SHRF…FVAH, GHSS…VVRS, and LHSG…ILMK.

The protein belongs to the WD repeat LIS1/nudF family. In terms of assembly, self-associates. Interacts with NDL1 and dynein.

It localises to the cytoplasm. The protein localises to the cytoskeleton. Its subcellular location is the spindle pole. Its function is as follows. Positively regulates the activity of the minus-end directed microtubule motor protein dynein. Plays a central role in positioning the mitotic spindle at the bud neck during cell division. Targets cytoplasmic dynein to microtubule plus ends, thereby promoting dynein-mediated microtubule sliding along the bud cortex and consequently the movement of the mitotic spindle to the bud neck. The sequence is that of Nuclear distribution protein PAC1 from Lachancea thermotolerans (strain ATCC 56472 / CBS 6340 / NRRL Y-8284) (Yeast).